The following is a 1041-amino-acid chain: Isoleucine--tRNA ligase (1041 aa).

Residues 53 to 63 carry the 'HIGH' region motif; the sequence is PFANGLPHYGH. A 'KMSKS' region motif is present at residues 619 to 623; that stretch reads KMSKS. Residue Lys622 participates in ATP binding.

This sequence belongs to the class-I aminoacyl-tRNA synthetase family. IleS type 2 subfamily. In terms of assembly, monomer. The cofactor is Zn(2+).

It is found in the cytoplasm. It carries out the reaction tRNA(Ile) + L-isoleucine + ATP = L-isoleucyl-tRNA(Ile) + AMP + diphosphate. Catalyzes the attachment of isoleucine to tRNA(Ile). As IleRS can inadvertently accommodate and process structurally similar amino acids such as valine, to avoid such errors it has two additional distinct tRNA(Ile)-dependent editing activities. One activity is designated as 'pretransfer' editing and involves the hydrolysis of activated Val-AMP. The other activity is designated 'posttransfer' editing and involves deacylation of mischarged Val-tRNA(Ile). The protein is Isoleucine--tRNA ligase (ileS) of Mycobacterium tuberculosis (strain CDC 1551 / Oshkosh).